Consider the following 71-residue polypeptide: MVYARRRLSPIKPGEPIRYTDVELLKKFVTERGKILPRRITGLTAKQQRELTAAIKRARIMGLLYFVNKEG.

It belongs to the bacterial ribosomal protein bS18 family. In terms of assembly, part of the 30S ribosomal subunit. Forms a tight heterodimer with protein bS6.

Its function is as follows. Binds as a heterodimer with protein bS6 to the central domain of the 16S rRNA, where it helps stabilize the platform of the 30S subunit. This is Small ribosomal subunit protein bS18 from Synechococcus sp. (strain JA-2-3B'a(2-13)) (Cyanobacteria bacterium Yellowstone B-Prime).